We begin with the raw amino-acid sequence, 211 residues long: Protein-L-isoaspartate O-methyltransferase (211 aa).

Residue S62 is part of the active site.

The protein belongs to the methyltransferase superfamily. L-isoaspartyl/D-aspartyl protein methyltransferase family.

The protein resides in the cytoplasm. It carries out the reaction [protein]-L-isoaspartate + S-adenosyl-L-methionine = [protein]-L-isoaspartate alpha-methyl ester + S-adenosyl-L-homocysteine. Its function is as follows. Catalyzes the methyl esterification of L-isoaspartyl residues in peptides and proteins that result from spontaneous decomposition of normal L-aspartyl and L-asparaginyl residues. It plays a role in the repair and/or degradation of damaged proteins. The chain is Protein-L-isoaspartate O-methyltransferase from Shewanella halifaxensis (strain HAW-EB4).